Here is a 236-residue protein sequence, read N- to C-terminus: Purine nucleoside phosphorylase DeoD-type 2 (236 aa).

Position 5 (His5) interacts with a purine D-ribonucleoside. Phosphate is bound by residues Gly21, Arg25, Arg44, and Arg88–Ser91. Residues Asp180 to Glu182 and Ser204 to Asp205 contribute to the a purine D-ribonucleoside site. The Proton donor role is filled by Asp205.

The protein belongs to the PNP/UDP phosphorylase family. In terms of assembly, homohexamer; trimer of homodimers.

The catalysed reaction is a purine D-ribonucleoside + phosphate = a purine nucleobase + alpha-D-ribose 1-phosphate. It carries out the reaction a purine 2'-deoxy-D-ribonucleoside + phosphate = a purine nucleobase + 2-deoxy-alpha-D-ribose 1-phosphate. Catalyzes the reversible phosphorolytic breakdown of the N-glycosidic bond in the beta-(deoxy)ribonucleoside molecules, with the formation of the corresponding free purine bases and pentose-1-phosphate. This Photobacterium profundum (strain SS9) protein is Purine nucleoside phosphorylase DeoD-type 2.